Reading from the N-terminus, the 185-residue chain is Protein GrpE (185 aa).

Residues Met1–Gln37 are disordered.

The protein belongs to the GrpE family. Homodimer.

Its subcellular location is the cytoplasm. Functionally, participates actively in the response to hyperosmotic and heat shock by preventing the aggregation of stress-denatured proteins, in association with DnaK and GrpE. It is the nucleotide exchange factor for DnaK and may function as a thermosensor. Unfolded proteins bind initially to DnaJ; upon interaction with the DnaJ-bound protein, DnaK hydrolyzes its bound ATP, resulting in the formation of a stable complex. GrpE releases ADP from DnaK; ATP binding to DnaK triggers the release of the substrate protein, thus completing the reaction cycle. Several rounds of ATP-dependent interactions between DnaJ, DnaK and GrpE are required for fully efficient folding. This Bacillus pumilus (strain SAFR-032) protein is Protein GrpE.